The primary structure comprises 101 residues: uncharacterized protein (101 aa).

This is an uncharacterized protein from Encephalitozoon cuniculi (strain GB-M1) (Microsporidian parasite).